A 317-amino-acid polypeptide reads, in one-letter code: Methionyl-tRNA formyltransferase (317 aa).

110–113 (SLLP) lines the (6S)-5,6,7,8-tetrahydrofolate pocket.

This sequence belongs to the Fmt family.

It carries out the reaction L-methionyl-tRNA(fMet) + (6R)-10-formyltetrahydrofolate = N-formyl-L-methionyl-tRNA(fMet) + (6S)-5,6,7,8-tetrahydrofolate + H(+). Attaches a formyl group to the free amino group of methionyl-tRNA(fMet). The formyl group appears to play a dual role in the initiator identity of N-formylmethionyl-tRNA by promoting its recognition by IF2 and preventing the misappropriation of this tRNA by the elongation apparatus. The polypeptide is Methionyl-tRNA formyltransferase (Lactiplantibacillus plantarum (strain ATCC BAA-793 / NCIMB 8826 / WCFS1) (Lactobacillus plantarum)).